Consider the following 400-residue polypeptide: Tryptophan synthase beta chain (400 aa).

Lysine 92 is subject to N6-(pyridoxal phosphate)lysine.

The protein belongs to the TrpB family. Tetramer of two alpha and two beta chains. Requires pyridoxal 5'-phosphate as cofactor.

It carries out the reaction (1S,2R)-1-C-(indol-3-yl)glycerol 3-phosphate + L-serine = D-glyceraldehyde 3-phosphate + L-tryptophan + H2O. The protein operates within amino-acid biosynthesis; L-tryptophan biosynthesis; L-tryptophan from chorismate: step 5/5. In terms of biological role, the beta subunit is responsible for the synthesis of L-tryptophan from indole and L-serine. The protein is Tryptophan synthase beta chain of Neisseria meningitidis serogroup C (strain 053442).